The chain runs to 46 residues: Protein PsbN (46 aa).

Residues valine 10 to phenylalanine 30 form a helical membrane-spanning segment.

It belongs to the PsbN family.

The protein resides in the cellular thylakoid membrane. Its function is as follows. May play a role in photosystem I and II biogenesis. The chain is Protein PsbN from Synechococcus sp. (strain WH7803).